Reading from the N-terminus, the 72-residue chain is SRY-related protein ADW4 (72 aa).

Positions 1–69 (VKRPMNAFMV…KHMADYPNYK (69 aa)) form a DNA-binding region, HMG box.

The protein resides in the nucleus. This is SRY-related protein ADW4 from Alligator mississippiensis (American alligator).